The sequence spans 887 residues: Exosome complex component 10 (887 aa).

Positions 1–10 (MAPPSPREHQ) are enriched in basic and acidic residues. Residues 1–23 (MAPPSPREHQSAPATSATKPDAE) form a disordered region. A Glycyl lysine isopeptide (Lys-Gly) (interchain with G-Cter in SUMO2) cross-link involves residue Lys-19. Residues 289 to 455 (HLVSSLDELV…YIYDRMRLEL (167 aa)) enclose the 3'-5' exonuclease domain. Mg(2+) contacts are provided by Asp-313, Glu-315, Asp-371, and Asp-440. An HRDC domain is found at 503–583 (NSQQLTAFQL…QQAREMPLLK (81 aa)). Lys-583 participates in a covalent cross-link: Glycyl lysine isopeptide (Lys-Gly) (interchain with G-Cter in SUMO1); alternate. Residue Lys-583 forms a Glycyl lysine isopeptide (Lys-Gly) (interchain with G-Cter in SUMO2); alternate linkage. Lys-710 is covalently cross-linked (Glycyl lysine isopeptide (Lys-Gly) (interchain with G-Cter in SUMO2)). Disordered stretches follow at residues 734–757 (KEPKEATKKKVAEQTAAREEAKEE) and 777–887 (NATK…WPKR). The segment covering 778-796 (ATKKRERATSDLRTIEQKQ) has biased composition (basic and acidic residues). Ser-823 is modified (phosphoserine). Glycyl lysine isopeptide (Lys-Gly) (interchain with G-Cter in SUMO2) cross-links involve residues Lys-835, Lys-861, and Lys-875.

The protein belongs to the exosome component 10/RRP6 family. In terms of assembly, component of the RNA exosome complex. The catalytically inactive RNA exosome core complex (Exo-9) associates with the catalytic subunit EXOSC10/RRP6 (via its N-terminus). Exo-9 may associate with DIS3 to form the nucleolar exosome complex, or DIS3L to form the cytoplasmic exosome complex. The RNA exosome complex interacts with cofactors C1D/RRP47, MPHOSPH6/MPP6 and MTREX/MTR4. Interacts with MTREX; the interaction with MTREX mediates the association of MTREX with nuclear RNA exosomes. Part of the small subunit (SSU) processome, composed of more than 70 proteins and the RNA chaperone small nucleolar RNA (snoRNA) U3. Interacts with ALYREF/THOC4. Interacts with DHX36; this interaction occurs in a RNase-insensitive manner. Interacts with NRDE2. Interacts (via C-terminus) with USP36 (via C-terminus); the interaction is facilitated by the association with RNA and promotes sumoylation of EXOSC10. Mg(2+) is required as a cofactor. Post-translationally, sumoylated by USP36; sumoylation does not significantly affect EXOSC10 nucleolar localization and association with core exosome and USP36, but regulates the nucleolar RNA exosome activity in rRNA processing by promoting binding of EXOSC10 to pre-rRNAs. Effects of sumoylation on EXOSC10 levels vary between different studies. Sumoylation of EXOSC10 is required for the modulation of EXOSC10 effects on cellular protein translation and cell proliferation. Sumoylation is promoted by mild hypothermia. As to expression, expressed in ovary (at protein level). Expressed in testis (at protein level). Expressed in lung (at protein level).

The protein localises to the cytoplasm. The protein resides in the nucleus. It is found in the nucleolus. It localises to the nucleoplasm. In terms of biological role, catalytic component of the RNA exosome complex which has 3'-&gt;5' exoribonuclease activity and participates in a multitude of cellular RNA processing and degradation events. In the nucleus, the RNA exosome complex is involved in proper maturation of stable RNA species such as rRNA, snRNA and snoRNA, in the elimination of RNA processing by-products and non-coding 'pervasive' transcripts, such as antisense RNA species and promoter-upstream transcripts (PROMPTs), and of mRNAs with processing defects, thereby limiting or excluding their export to the cytoplasm. Part of the small subunit (SSU) processome, first precursor of the small eukaryotic ribosomal subunit. During the assembly of the SSU processome in the nucleolus, many ribosome biogenesis factors, an RNA chaperone and ribosomal proteins associate with the nascent pre-rRNA and work in concert to generate RNA folding, modifications, rearrangements and cleavage as well as targeted degradation of pre-ribosomal RNA by the RNA exosome. The RNA exosome may be involved in Ig class switch recombination (CSR) and/or Ig variable region somatic hypermutation (SHM) by targeting AICDA deamination activity to transcribed dsDNA substrates. In the cytoplasm, the RNA exosome complex is involved in general mRNA turnover and specifically degrades inherently unstable mRNAs containing AU-rich elements (AREs) within their 3' untranslated regions, and in RNA surveillance pathways, preventing translation of aberrant mRNAs. It seems to be involved in degradation of histone mRNA. EXOSC10 is required for nucleolar localization of C1D and probably mediates the association of MTREX, C1D and MPHOSPH6 with the RNA exosome involved in the maturation of 5.8S rRNA. Plays a role in the recruitment of replication protein A complex (RPA) and RAD51 to DNA double-strand breaks caused by irradiation, contributing to DNA repair by homologous recombination. Regulates levels of damage-induced RNAs in order to prevent DNA-RNA hybrid formation at DNA double-strand breaks and limit DNA end resection after damage. Plays a role in oocyte development, maturation and survival. Required for normal testis development and mitotic division of spermatogonia. Plays a role in proper embryo development. Required for global protein translation. Required for cell proliferation. The sequence is that of Exosome complex component 10 (Exosc10) from Mus musculus (Mouse).